A 935-amino-acid polypeptide reads, in one-letter code: Coiled-coil domain-containing protein 191 (935 aa).

Coiled coils occupy residues 189–324 (RLTM…ENQQ), 366–438 (YTRS…ALLK), 554–589 (RHVF…AEAQ), and 660–740 (KAME…LEAI). Disordered stretches follow at residues 596-661 (SAVT…ILKA) and 678-715 (EKKK…RKRE).

The protein is Coiled-coil domain-containing protein 191 (CCDC191) of Macaca fascicularis (Crab-eating macaque).